The following is an 82-amino-acid chain: Fibroblast growth factor 8 (82 aa).

Asn-68 carries an N-linked (GlcNAc...) asparagine glycan.

Belongs to the heparin-binding growth factors family. In terms of assembly, monomer. Homodimer. Interacts with FGFR1, FGFR2, FGFR3 and FGFR4. Affinity between fibroblast growth factors (FGFs) and their receptors is increased by heparan sulfate glycosaminoglycans that function as coreceptors.

It localises to the secreted. Its function is as follows. Plays an important role in the regulation of embryonic development, cell proliferation, cell differentiation and cell migration. Required for normal brain, eye, ear and limb development during embryogenesis. Required for normal development of the gonadotropin-releasing hormone (GnRH) neuronal system. Plays a role in neurite outgrowth in hippocampal cells. This chain is Fibroblast growth factor 8 (FGF8), found in Canis lupus familiaris (Dog).